Here is a 503-residue protein sequence, read N- to C-terminus: MRLCGVASAFLSTLILIAHIDASTNLNVSVTDVQNISLPGDQIGNFTQSVSGPPSGDEERTSANSAIRKVDLFVEKLITFQVALRAKINRFLAKLKLAWWRLRNVDPNVTFNKLNLHEADNDILSLDNFHTWVKLVESYNLQHPAEQVSILSKLQEQFGEFEVSIMLEQAKNGADKYTEDIALELQHEQISRWRDDNLSLTALYKALQFGKSEPSLLTGPALRVWNIYTSNIESAETSLFDYLYQTIEDAHLSSLLIAAKQSPETVELATKIQNQLRQKWLEILVPPNLVFQHYKLDTNPTHLLDRPETKLWVRYQKMYWGKTKKEVTLKEMIEDFYKADEIAIIIKSATTDYGKHLAKKLPQCDSKHFKTFHNLTILPLLFVFHYTIGAEDDLSSEKNLISQYNHVPTSCETANCVAGGCLFENCASPLLCRGGLCYFRKCKDATCEGGACIFDNTAEASCPGGGCQFVNVPVTLADGYCDGGGCTLDGDDHPSSLAGSLAE.

The N-terminal stretch at 1-22 is a signal peptide; that stretch reads MRLCGVASAFLSTLILIAHIDA. Asn27, Asn35, and Asn45 each carry an N-linked (GlcNAc...) asparagine glycan. The short motif at 57–60 is the dEER element; sequence DEER. Asn108, Asn197, and Asn374 each carry an N-linked (GlcNAc...) asparagine glycan.

This sequence belongs to the RxLR effector family.

The protein resides in the secreted. The protein localises to the host Golgi apparatus. Secreted effector that suppresses pattern-triggered immunity (PTI) in plant host. The protein is Secreted RxLR effector protein RXLR-C08 of Plasmopara halstedii (Downy mildew of sunflower).